A 680-amino-acid chain; its full sequence is Probable inactive DNA (cytosine-5)-methyltransferase DRM3 (680 aa).

Residues 1–24 are disordered; sequence MVKVEDDVEGSGINASVGDLRDAA. Residues 45 to 86 enclose the UBA 1 domain; it reads SSSSHVRSQFIGMGFSPMLVDRVLQKHGDRDSDTILEALLSQ. A disordered region spans residues 91-113; sequence KSGSESGSLGDLFDSDNEENSSH. The 42-residue stretch at 194–235 folds into the UBA 2 domain; sequence SLFGVMDKTLHLLQMGFTEEEVSSVIDKAGPEATVLELADTI. The region spanning 336–663 is the SAM-dependent MTase DRM-type domain; it reads IRRNVRSDVA…QRVKHIMGRL (328 aa).

Belongs to the class I-like SAM-binding methyltransferase superfamily. DRM-methyltransferase family.

It localises to the nucleus. Involved in de novo DNA methylation. Involved in RNA-directed DNA methylation (RdDM). The protein is Probable inactive DNA (cytosine-5)-methyltransferase DRM3 of Oryza sativa subsp. japonica (Rice).